Consider the following 293-residue polypeptide: 4-hydroxy-tetrahydrodipicolinate synthase (293 aa).

Thr-47 is a binding site for pyruvate. Tyr-135 serves as the catalytic Proton donor/acceptor. Lys-163 serves as the catalytic Schiff-base intermediate with substrate. Val-205 contacts pyruvate.

The protein belongs to the DapA family. As to quaternary structure, homotetramer; dimer of dimers.

The protein localises to the cytoplasm. The catalysed reaction is L-aspartate 4-semialdehyde + pyruvate = (2S,4S)-4-hydroxy-2,3,4,5-tetrahydrodipicolinate + H2O + H(+). Its pathway is amino-acid biosynthesis; L-lysine biosynthesis via DAP pathway; (S)-tetrahydrodipicolinate from L-aspartate: step 3/4. In terms of biological role, catalyzes the condensation of (S)-aspartate-beta-semialdehyde [(S)-ASA] and pyruvate to 4-hydroxy-tetrahydrodipicolinate (HTPA). In Methylibium petroleiphilum (strain ATCC BAA-1232 / LMG 22953 / PM1), this protein is 4-hydroxy-tetrahydrodipicolinate synthase.